Here is a 398-residue protein sequence, read N- to C-terminus: Acetate kinase (398 aa).

N10 serves as a coordination point for Mg(2+). K17 is an ATP binding site. R89 provides a ligand contact to substrate. The active-site Proton donor/acceptor is the D148. Residues 208 to 212 (HLGNG), 283 to 285 (DCR), and 331 to 335 (GIGEN) each bind ATP. Position 385 (E385) interacts with Mg(2+).

The protein belongs to the acetokinase family. As to quaternary structure, homodimer. It depends on Mg(2+) as a cofactor. Mn(2+) is required as a cofactor.

The protein localises to the cytoplasm. The catalysed reaction is acetate + ATP = acetyl phosphate + ADP. Its pathway is metabolic intermediate biosynthesis; acetyl-CoA biosynthesis; acetyl-CoA from acetate: step 1/2. Its function is as follows. Catalyzes the formation of acetyl phosphate from acetate and ATP. Can also catalyze the reverse reaction. The polypeptide is Acetate kinase (Histophilus somni (strain 2336) (Haemophilus somnus)).